The following is a 394-amino-acid chain: E3 ubiquitin-protein ligase RNF149 (394 aa).

Positions 1–31 (MAARRRPAAGVGARDALAVLALALCTPGVGG) are cleaved as a signal peptide. N-linked (GlcNAc...) asparagine glycans are attached at residues Asn51 and Asn141. The region spanning 66–171 (SSLREERQGL…PKGREIFDLV (106 aa)) is the PA domain. The chain crosses the membrane as a helical span at residues 197 to 217 (VVFVAIAFITMMIISLAWLIF). The RING-type; atypical zinc finger occupies 265–306 (CAVCIENFKVKDVIRILPCKHIFHRICIDPWLLDHRTCPMCK). Residues 321–394 (DTQELPTPEA…SEPQHGGSIC (74 aa)) are disordered. Thr327 bears the Phosphothreonine mark. A glycan (N-linked (GlcNAc...) asparagine) is linked at Asn339. 2 positions are modified to phosphoserine: Ser341 and Ser344. The segment covering 352–362 (SNLPSSSSSES) has biased composition (low complexity).

Its subcellular location is the membrane. It catalyses the reaction S-ubiquitinyl-[E2 ubiquitin-conjugating enzyme]-L-cysteine + [acceptor protein]-L-lysine = [E2 ubiquitin-conjugating enzyme]-L-cysteine + N(6)-ubiquitinyl-[acceptor protein]-L-lysine.. It functions in the pathway protein modification; protein ubiquitination. E3 ubiquitin-protein ligase. Ubiquitinates BRAF, inducing its proteasomal degradation. This chain is E3 ubiquitin-protein ligase RNF149 (Rnf149), found in Mus musculus (Mouse).